The sequence spans 1108 residues: Topless-related protein 3 (1108 aa).

A LisH domain is found at 4–36 (LSRELVFLILQFLEEEKFKESVHRLEKESGFFF). Positions 34–92 (FFFNTKYFDEKVLAGEWDDVETYLSGFTKVDDNRYSMKIFFEIRKQKYLEALDRQEKAK) constitute a CTLH domain. Serine 214 bears the Phosphoserine mark. WD repeat units lie at residues 343–383 (HQGS…RLVS), 405–444 (ETPI…DLRQ), 450–491 (AHVG…HFTF), 493–534 (GHDA…SRVD), 583–623 (EFQK…VLTS), and 628–667 (GGLP…RSLR). Residues 706–725 (HSQMLNGVDPSKSRIDDSTD) form a disordered region. Basic and acidic residues predominate over residues 716-725 (SKSRIDDSTD). 5 WD repeats span residues 751 to 790 (GSST…QNPS), 818 to 856 (NLEN…VMTT), 859 to 899 (PPPP…VKSK), 902 to 941 (GHQK…KRKS), and 994 to 1033 (SLSA…LRCR). The disordered stretch occupies residues 1084 to 1108 (GMIPPSEAINSPSTTSNQTPEQLQR). Residues 1091-1108 (AINSPSTTSNQTPEQLQR) show a composition bias toward polar residues.

As to quaternary structure, tetramer. Interacts with NINJA/AFPH2. Interacts with SMXL6. Interacts with SPL (via EAR motif). Interacts with SPEAR3/TIE1.

Its subcellular location is the nucleus. Functionally, transcriptional corepressor. Negative regulator of jasmonate responses. This is Topless-related protein 3 (TPR3) from Arabidopsis thaliana (Mouse-ear cress).